A 574-amino-acid polypeptide reads, in one-letter code: Optineurin (574 aa).

Residues 1–33 form a disordered region; that stretch reads MSHQPLSCLTEKGDSPTETTGNGPPTLAHPNLD. A coiled-coil region spans residues 38–170; the sequence is HELLQQMREL…VSELQLKLNS (133 aa). Residues 58 to 209 form an interaction with Rab8 region; that stretch reads MKLNNQAMKG…GPIRTDSIDT (152 aa). Positions 176 to 181 match the LIR motif; sequence DSFVEI. Serine 177 bears the Phosphoserine; by TBK1 mark. Phosphoserine is present on serine 198. Positions 233–496 form a coiled coil; the sequence is CLREGNQKVE…ALQLAVLLKD (264 aa). Over residues 262–286 the composition is skewed to basic and acidic residues; the sequence is AKDRSETETQTEEHKEQEKEEEKSP. Positions 262–292 are disordered; that stretch reads AKDRSETETQTEEHKEQEKEEEKSPETVGSE. Serine 336 bears the Phosphoserine mark. The tract at residues 405 to 574 is interaction with HD; sequence KRRESEKVDK…LLIHVTDCII (170 aa). An interaction with MYO6 region spans residues 406–515; sequence RRESEKVDKV…RQSLMEMQSR (110 aa). Residues 468 to 473 carry the UBAN motif; it reads DFHAER. Phosphoserine is present on serine 521. A CCHC NOA-type zinc finger spans residues 544–574; the sequence is QQNIPIHSCPKCGEVLPDIDTLLIHVTDCII. Residues cysteine 552, cysteine 555, histidine 568, and cysteine 572 each coordinate Zn(2+).

Self-associates. Interacts with HD. Interacts with GTF3A. Interacts with MYO6. Interacts (via UBAN) with ubiquitinated TFRC. Interacts with GTP-bound Rab8 (RAB8A and/or RAB8B). Interacts with TBC1D17. Interacts with TBK1. Interacts with TRAF3. Binds to linear ubiquitin chains. Interacts with LC3 family members MAP1LC3A, MAP1LC3B, GABARAP, GABARAPL1 and GABARAPL2; OPTN phosphorylation increases the association (at least with MAP1LC3B). Interacts with RAB12; the interaction may be indirect. Interacts with TBK1; this interaction leads to the Golgi localization of TBK1 and its subsequent activation. Interacts with palmitoyltransferase ZDHHC17/HIP14; the interaction does not lead to palmitoylation of OPTN. Interacts with CYLD. Interacts with TOM1; the interaction is indirect and is mediated by MYO6, which acts as a bridge between TOM1 and OPTN. Interacts with USP12; the interaction is independent of USP12 deubiquitinase activity and may be involved in regulation of autophagic flux. Post-translationally, phosphorylated by TBK1, leading to restrict bacterial proliferation in case of infection. As to expression, present in aqueous humor of the eye (at protein level). Expressed in trabecular meshwork and astrocytes.

The protein localises to the cytoplasm. Its subcellular location is the perinuclear region. The protein resides in the golgi apparatus. It is found in the trans-Golgi network. It localises to the cytoplasmic vesicle. The protein localises to the autophagosome. Its subcellular location is the recycling endosome. Its function is as follows. Plays an important role in the maintenance of the Golgi complex, in membrane trafficking, in exocytosis, through its interaction with myosin VI and Rab8. Links myosin VI to the Golgi complex and plays an important role in Golgi ribbon formation. Negatively regulates the induction of IFNB in response to RNA virus infection. Plays a neuroprotective role in the eye and optic nerve. Probably part of the TNF-alpha signaling pathway that can shift the equilibrium toward induction of cell death. May act by regulating membrane trafficking and cellular morphogenesis via a complex that contains Rab8 and huntingtin (HD). Mediates the interaction of Rab8 with the probable GTPase-activating protein TBC1D17 during Rab8-mediated endocytic trafficking, such as that of transferrin receptor (TFRC/TfR); regulates Rab8 recruitment to tubules emanating from the endocytic recycling compartment. Autophagy receptor that interacts directly with both the cargo to become degraded and an autophagy modifier of the MAP1 LC3 family; targets ubiquitin-coated bacteria (xenophagy) and appears to function in the same pathway as SQSTM1 and CALCOCO2/NDP52. In Sus scrofa (Pig), this protein is Optineurin (OPTN).